The following is a 205-amino-acid chain: Ribonuclease HII (205 aa).

An RNase H type-2 domain is found at 14-205; that stretch reads ERICGIDEAG…SFKVRRLNEA (192 aa). A divalent metal cation-binding residues include Asp-20, Glu-21, and Asp-117.

It belongs to the RNase HII family. It depends on Mn(2+) as a cofactor. Mg(2+) is required as a cofactor.

The protein localises to the cytoplasm. The catalysed reaction is Endonucleolytic cleavage to 5'-phosphomonoester.. Endonuclease that specifically degrades the RNA of RNA-DNA hybrids. This Chlorobium phaeovibrioides (strain DSM 265 / 1930) (Prosthecochloris vibrioformis (strain DSM 265)) protein is Ribonuclease HII.